The following is a 509-amino-acid chain: ATP synthase subunit beta (509 aa).

167 to 174 (GGAGVGKT) is a binding site for ATP. Positions 476–509 (ESLGAKMEDTSGDGAPAQSDSKSDSKGDDADKDA) are disordered. Positions 496–509 (SKSDSKGDDADKDA) are enriched in basic and acidic residues.

The protein belongs to the ATPase alpha/beta chains family. In terms of assembly, F-type ATPases have 2 components, CF(1) - the catalytic core - and CF(0) - the membrane proton channel. CF(1) has five subunits: alpha(3), beta(3), gamma(1), delta(1), epsilon(1). CF(0) has three main subunits: a(1), b(2) and c(9-12). The alpha and beta chains form an alternating ring which encloses part of the gamma chain. CF(1) is attached to CF(0) by a central stalk formed by the gamma and epsilon chains, while a peripheral stalk is formed by the delta and b chains.

Its subcellular location is the cell membrane. The catalysed reaction is ATP + H2O + 4 H(+)(in) = ADP + phosphate + 5 H(+)(out). Its function is as follows. Produces ATP from ADP in the presence of a proton gradient across the membrane. The catalytic sites are hosted primarily by the beta subunits. In Mycobacterium sp. (strain KMS), this protein is ATP synthase subunit beta.